A 299-amino-acid polypeptide reads, in one-letter code: Non-structural protein V (299 aa).

Residues Ser40 to Glu91 form a disordered region. An interaction with host STAT1 region spans residues His110–Val120. The interval Ser133–Tyr163 is disordered. The span at Gly144–Thr160 shows a compositional bias: acidic residues. The Zn(2+) site is built by His232, Cys251, Cys255, Cys267, Cys269, Cys272, Cys276, and Cys279.

The protein belongs to the paramyxoviruses V protein family. As to quaternary structure, interacts with host IFIH1/MDA5 and DHX58/LGP2; these interactions are involved in the inhibition of the host type I interferon signaling pathway. Interacts with host TYK2; this interaction inhibits the type I interferon signaling pathway without affecting the type II pathway. Interacts with host IRF7; this interaction inhibits IRF7 translocation to the nucleus. Interacts with host CHUK. Interacts with host RELA/p65; this interaction inhibits the nuclear translocation of NF-KappaB. Interacts (via N-terminus) with host STAT1 and JAK1; these interactions inhibit STAT1 phosphorylation by Jak1 and thereby the type I interferon signaling pathway. Interacts (via C-terminus) with host STAT2; this interaction is involved in the inhibition of the host type I interferon signaling pathway. Forms a complex with host PPP1CA and PPP1CC; this interaction prevents dephosphorylation of host IFIH1/MDA5 and leads to the inhibition of the host type I interferon signaling pathway. Interacts with host IRF9; this interaction prevents the binding of IRF9 to STAT2 and thereby the type I interferon signaling pathway. Interacts with host RIGI regulatory protein (via CARDs domain) and host TRIM25 (via SPRY domain); these interactions prevent TRIM25-mediated ubiquitination of RIG-I and disrupts downstream RIG-I signaling.

Its subcellular location is the host cytoplasm. Its function is as follows. Plays an essential role in the inhibition of host immune response. Prevents the establishment of cellular antiviral state by blocking interferon-alpha/beta (IFN-alpha/beta) production and signaling pathway. Interacts with host IFIH1/MDA5 and DHX58/LGP2 to inhibit the transduction pathway involved in the activation of IFN-beta promoter, thus protecting the virus against cell antiviral state. Blocks the type I interferon signaling pathway by interacting with host TYK2 and thereby inhibiting downstream STAT1 and STAT2 phosphorylation. Blocks the type I interferon signaling pathway by disrupting the RIG-I signaling pathway. Moderately affects the type II interferon signaling. Prevents PP1alpha/gamma-mediated dephosphorylation of host IFIH1/MDA5 and thus blocks its activation. The polypeptide is Non-structural protein V (P/V) (Homo sapiens (Human)).